We begin with the raw amino-acid sequence, 99 residues long: Protein Frey (99 aa).

A helical membrane pass occupies residues 7 to 29; that stretch reads GALYPRAGLSLFLLYLVLAAVLL. Positions 65–88 are disordered; it reads PKHPWPRGPRPLLSRAQQRKRDGP.

In terms of assembly, interacts with SPPL2C (via active sites); the interaction stabilizes FREY1 protein and inhibits SPPL2C proteolytic activity. Interacts with IZUMO1; the interaction retains IZUMO1 at the endoplasmic reticulum membrane and coordinates IZUMO1 complex assembly.

It is found in the endoplasmic reticulum membrane. Functionally, key regulator for male fertility expressed transiently in round spermatids where it recruits IZUMO1 at the endoplasmic reticulum (ER) membrane and coordinates the oolemmal binding multimeric complex (IZUMO1 complex) assembly. Upon complete assembly of the IZUMO1 complex, its ER retention is released, facilitating IZUMO1 complex export to the acrosome. Through the interaction with SPPL2C, inhibits its intramembrane protease activity directly accessing the catalytic center of an I-CLiP. The protein is Protein Frey of Ailuropoda melanoleuca (Giant panda).